We begin with the raw amino-acid sequence, 348 residues long: Protein-glutamate methylesterase/protein-glutamine glutaminase 5 (348 aa).

The region spanning 8–125 is the Response regulatory domain; the sequence is RVLVVDDSAF…TERLYELGGE (118 aa). Aspartate 59 carries the post-translational modification 4-aspartylphosphate. The CheB-type methylesterase domain maps to 157–348; that stretch reads RAAAKSLVVV…MLALLRRHVR (192 aa). Residues serine 169, histidine 196, and aspartate 292 contribute to the active site.

It belongs to the CheB family. Phosphorylated by CheA. Phosphorylation of the N-terminal regulatory domain activates the methylesterase activity.

It is found in the cytoplasm. The catalysed reaction is [protein]-L-glutamate 5-O-methyl ester + H2O = L-glutamyl-[protein] + methanol + H(+). The enzyme catalyses L-glutaminyl-[protein] + H2O = L-glutamyl-[protein] + NH4(+). In terms of biological role, involved in chemotaxis. Part of a chemotaxis signal transduction system that modulates chemotaxis in response to various stimuli. Catalyzes the demethylation of specific methylglutamate residues introduced into the chemoreceptors (methyl-accepting chemotaxis proteins or MCP) by CheR. Also mediates the irreversible deamidation of specific glutamine residues to glutamic acid. The polypeptide is Protein-glutamate methylesterase/protein-glutamine glutaminase 5 (Myxococcus xanthus (strain DK1622)).